We begin with the raw amino-acid sequence, 64 residues long: Protein sigN173 (64 aa).

The sequence is that of Protein sigN173 from Dictyostelium discoideum (Social amoeba).